Consider the following 75-residue polypeptide: Metallothionein-like protein 1 (75 aa).

Belongs to the metallothionein superfamily. Type 15 family.

Its function is as follows. Metallothioneins have a high content of cysteine residues that bind various heavy metals. This is Metallothionein-like protein 1 (ALI1) from Triticum aestivum (Wheat).